The sequence spans 259 residues: Triosephosphate isomerase (259 aa).

10-12 (NWK) is a substrate binding site. The active-site Electrophile is the histidine 100. Glutamate 172 acts as the Proton acceptor in catalysis. Residues glycine 178, serine 218, and 239–240 (GG) each bind substrate.

This sequence belongs to the triosephosphate isomerase family. As to quaternary structure, homodimer.

The protein resides in the cytoplasm. The catalysed reaction is D-glyceraldehyde 3-phosphate = dihydroxyacetone phosphate. Its pathway is carbohydrate biosynthesis; gluconeogenesis. It participates in carbohydrate degradation; glycolysis; D-glyceraldehyde 3-phosphate from glycerone phosphate: step 1/1. In terms of biological role, involved in the gluconeogenesis. Catalyzes stereospecifically the conversion of dihydroxyacetone phosphate (DHAP) to D-glyceraldehyde-3-phosphate (G3P). The polypeptide is Triosephosphate isomerase (Corynebacterium glutamicum (strain ATCC 13032 / DSM 20300 / JCM 1318 / BCRC 11384 / CCUG 27702 / LMG 3730 / NBRC 12168 / NCIMB 10025 / NRRL B-2784 / 534)).